A 733-amino-acid chain; its full sequence is Protein psiM (733 aa).

An N-terminal signal peptide occupies residues 1 to 26; it reads MKKINNNKIFVLFLTILLYLLNITTA. N-linked (GlcNAc...) asparagine glycans are attached at residues Asn22, Asn65, and Asn96. The Extracellular portion of the chain corresponds to 27–672; sequence QKPVSINIKI…VCQKAALVST (646 aa). The region spanning 114–260 is the PA14 domain; that stretch reads NYDSDSGNYI…YDYCGVCNGD (147 aa). Asn277, Asn336, Asn379, Asn428, Asn471, Asn537, Asn573, and Asn641 each carry an N-linked (GlcNAc...) asparagine glycan. Residues 673-693 form a helical membrane-spanning segment; it reads AVIASVVVVGAVVLGAAIFAG. Topologically, residues 694–733 are cytoplasmic; that stretch reads KKGYDAWKTSQGNVMAASQANPLYTQSSNGGENPLYNSPT.

The protein belongs to the prespore-cell-inducing factor family.

The protein resides in the membrane. The protein is Protein psiM (psiM) of Dictyostelium discoideum (Social amoeba).